Consider the following 36-residue polypeptide: Pancreatic polypeptide (36 aa).

Tyrosine amide is present on Tyr36.

This sequence belongs to the NPY family.

The protein resides in the secreted. Hormone secreted by pancreatic cells that acts as a regulator of pancreatic and gastrointestinal functions probably by signaling through the G protein-coupled receptor NPY4R2. The polypeptide is Pancreatic polypeptide (PPY) (Didelphis virginiana (North American opossum)).